Consider the following 149-residue polypeptide: uncharacterized protein (149 aa).

Residues 111–140 are a coiled coil; the sequence is HKALEKATELIENEEELLKREGIKRENLKF.

This is an uncharacterized protein from Aquifex aeolicus (strain VF5).